The sequence spans 85 residues: Small ribosomal subunit protein uS17 (85 aa).

It belongs to the universal ribosomal protein uS17 family. In terms of assembly, part of the 30S ribosomal subunit.

One of the primary rRNA binding proteins, it binds specifically to the 5'-end of 16S ribosomal RNA. The protein is Small ribosomal subunit protein uS17 of Desulforudis audaxviator (strain MP104C).